Here is a 287-residue protein sequence, read N- to C-terminus: GTPase Era (287 aa).

Positions 6-178 (FSGTSVIIGK…IQNKLKIVPK (173 aa)) constitute an Era-type G domain. The segment at 14 to 21 (GKPNVGKS) is G1. 14-21 (GKPNVGKS) is a GTP binding site. The segment at 40–44 (HTTQS) is G2. The G3 stretch occupies residues 62-65 (DTPG). GTP is bound by residues 62–66 (DTPGI) and 124–127 (NKID). The tract at residues 124 to 127 (NKID) is G4. A G5 region spans residues 154–156 (ISG). The 76-residue stretch at 207 to 282 (LGDELPYSIQ…SIYLSLKVIK (76 aa)) folds into the KH type-2 domain.

Belongs to the TRAFAC class TrmE-Era-EngA-EngB-Septin-like GTPase superfamily. Era GTPase family. In terms of assembly, monomer.

The protein localises to the cytoplasm. It localises to the cell membrane. Its function is as follows. An essential GTPase that binds both GDP and GTP, with rapid nucleotide exchange. Plays a role in 16S rRNA processing and 30S ribosomal subunit biogenesis and possibly also in cell cycle regulation and energy metabolism. The chain is GTPase Era from Buchnera aphidicola subsp. Baizongia pistaciae (strain Bp).